Here is a 384-residue protein sequence, read N- to C-terminus: Fructose-1,6-bisphosphate aldolase/phosphatase (384 aa).

Residue Asp11 is the Proton acceptor; for FBP phosphatase activity of the active site. The Mg(2+) site is built by Asp11, His18, Asp52, and Asp53. His18 contributes to the beta-D-fructose 1,6-bisphosphate binding site. Residue His18 coordinates dihydroxyacetone phosphate. Residue Tyr90 coordinates beta-D-fructose 1,6-bisphosphate. Residue Gln94 participates in Mg(2+) binding. 103–104 lines the beta-D-fructose 1,6-bisphosphate pocket; the sequence is GN. Asp131 lines the Mg(2+) pocket. Beta-D-fructose 1,6-bisphosphate is bound at residue Lys132. Lys132 lines the dihydroxyacetone phosphate pocket. Catalysis depends on Tyr228, which acts as the Proton donor/acceptor; for FBP aldolase activity. Positions 231, 232, and 233 each coordinate Mg(2+). The active-site Schiff-base intermediate with DHAP; for FBP aldolase activity is the Lys231. Beta-D-fructose 1,6-bisphosphate-binding positions include 241–242, Arg265, Asp286, and Tyr347; that span reads QH. Residues Arg265 and Asp286 each contribute to the dihydroxyacetone phosphate site.

The protein belongs to the FBP aldolase/phosphatase family. In terms of assembly, homooctamer; dimer of tetramers. The cofactor is Mg(2+).

It catalyses the reaction beta-D-fructose 1,6-bisphosphate + H2O = beta-D-fructose 6-phosphate + phosphate. The enzyme catalyses beta-D-fructose 1,6-bisphosphate = D-glyceraldehyde 3-phosphate + dihydroxyacetone phosphate. It participates in carbohydrate biosynthesis; gluconeogenesis. Its function is as follows. Catalyzes two subsequent steps in gluconeogenesis: the aldol condensation of dihydroxyacetone phosphate (DHAP) and glyceraldehyde-3-phosphate (GA3P) to fructose-1,6-bisphosphate (FBP), and the dephosphorylation of FBP to fructose-6-phosphate (F6P). This chain is Fructose-1,6-bisphosphate aldolase/phosphatase, found in Sulfurisphaera tokodaii (strain DSM 16993 / JCM 10545 / NBRC 100140 / 7) (Sulfolobus tokodaii).